Consider the following 360-residue polypeptide: UDP-N-acetylglucosamine--N-acetylmuramyl-(pentapeptide) pyrophosphoryl-undecaprenol N-acetylglucosamine transferase (360 aa).

Positions 198 and 289 each coordinate UDP-N-acetyl-alpha-D-glucosamine.

It belongs to the glycosyltransferase 28 family. MurG subfamily.

The protein localises to the cell membrane. It catalyses the reaction Mur2Ac(oyl-L-Ala-gamma-D-Glu-L-Lys-D-Ala-D-Ala)-di-trans,octa-cis-undecaprenyl diphosphate + UDP-N-acetyl-alpha-D-glucosamine = beta-D-GlcNAc-(1-&gt;4)-Mur2Ac(oyl-L-Ala-gamma-D-Glu-L-Lys-D-Ala-D-Ala)-di-trans,octa-cis-undecaprenyl diphosphate + UDP + H(+). It participates in cell wall biogenesis; peptidoglycan biosynthesis. Functionally, cell wall formation. Catalyzes the transfer of a GlcNAc subunit on undecaprenyl-pyrophosphoryl-MurNAc-pentapeptide (lipid intermediate I) to form undecaprenyl-pyrophosphoryl-MurNAc-(pentapeptide)GlcNAc (lipid intermediate II). This Streptococcus pyogenes serotype M3 (strain SSI-1) protein is UDP-N-acetylglucosamine--N-acetylmuramyl-(pentapeptide) pyrophosphoryl-undecaprenol N-acetylglucosamine transferase.